The following is a 141-amino-acid chain: Protein GAT3 (141 aa).

A GATA-type zinc finger spans residues 72–98 (CPQCAVIKTSPQWREGPDGEVTLCNAC).

The chain is Protein GAT3 (GAT3) from Saccharomyces cerevisiae (strain ATCC 204508 / S288c) (Baker's yeast).